A 241-amino-acid chain; its full sequence is Uridylate kinase (241 aa).

Residues 15 to 18 (KLSG), glycine 58, and arginine 62 contribute to the ATP site. UMP is bound by residues aspartate 77 and 138–145 (TGNPYFTT). The ATP site is built by threonine 165, tyrosine 171, and aspartate 174.

This sequence belongs to the UMP kinase family. In terms of assembly, homohexamer.

The protein resides in the cytoplasm. It carries out the reaction UMP + ATP = UDP + ADP. Its pathway is pyrimidine metabolism; CTP biosynthesis via de novo pathway; UDP from UMP (UMPK route): step 1/1. Its activity is regulated as follows. Inhibited by UTP. In terms of biological role, catalyzes the reversible phosphorylation of UMP to UDP. The sequence is that of Uridylate kinase from Desulfotalea psychrophila (strain LSv54 / DSM 12343).